A 369-amino-acid chain; its full sequence is MTEPVRVEVKTASPYPVVIGRGLLGDLVAEFDGARTVAIFHQPPLAETAEAVRAALAEKGIDAHRIEIPDAEDGKDLAVAGFCWDVLGRIGLTRSDAIMSLGGGAATDLTGFVAATWMRGVKVVHVPTTLLAMVDAAVGGKTGINTEAGKNLVGSFHEPGAVFIDLATLETVPHNEIVAGMAEVIKTGFIADPVILDLIEADPKAALDPSGTVLPELIRRSVEVKAKVVAADLRESDLREILNYGHTLGHAIERRERYKWRHGAAVSVGLVFAAELGRLAGRLDDATADRHKSILDLVGLPTSYDGDAFGDLMKGMQTDKKNRAGLLRFVVLDGLAKPGRLEGPDPSLLVAAYSAIARDPRPAGGTVLL.

Residues 70 to 75, 104 to 108, 128 to 129, lysine 141, lysine 150, and 168 to 171 each bind NAD(+); these read DAEDGK, GAATD, TT, and TLET. Residues glutamate 183, histidine 246, and histidine 262 each coordinate Zn(2+).

Belongs to the sugar phosphate cyclases superfamily. Dehydroquinate synthase family. Co(2+) is required as a cofactor. The cofactor is Zn(2+). Requires NAD(+) as cofactor.

The protein resides in the cytoplasm. The catalysed reaction is 7-phospho-2-dehydro-3-deoxy-D-arabino-heptonate = 3-dehydroquinate + phosphate. The protein operates within metabolic intermediate biosynthesis; chorismate biosynthesis; chorismate from D-erythrose 4-phosphate and phosphoenolpyruvate: step 2/7. Its function is as follows. Catalyzes the conversion of 3-deoxy-D-arabino-heptulosonate 7-phosphate (DAHP) to dehydroquinate (DHQ). The chain is 3-dehydroquinate synthase from Rhodococcus erythropolis (strain PR4 / NBRC 100887).